The sequence spans 183 residues: Putative manganese efflux pump MntP 1 (183 aa).

The next 6 helical transmembrane spans lie at 6–26 (LFLL…CIGI), 36–56 (IIFV…GGYI), 64–84 (IVPI…ILMI), 100–120 (IMYL…GFTT), 130–150 (LFMS…LGII), and 158–178 (ISII…LFGL).

It belongs to the MntP (TC 9.B.29) family.

The protein resides in the cell membrane. Its function is as follows. Probably functions as a manganese efflux pump. The sequence is that of Putative manganese efflux pump MntP 1 from Clostridium botulinum (strain Langeland / NCTC 10281 / Type F).